A 355-amino-acid chain; its full sequence is MYTSLISIKEKYELLAQELTKLEIFNDIKKYTKIQKEHASIEDIAIAFINYLAAESSYNLSKEILQNEKDEELIALAKEDIDEQSTLMQKLEQELKELLLPQDENDNKNVIMEIRGAAGGDEGDIFSGDLFKMYQKFCEANDFKIKIVDSVYGTAGGYSRIVFIVKGEKVFSKLKFERGVHRVQRVPQTETQGRVHTSTATVTVLPEVDDDVKIEIRPEDIEVDVFRSSGAGGQSVNTTDSAVRITHKKTGIIVTSQDERSQIMNRETALKILKAKLYEIEVKKREEEEQGLRKLAGTGDRSEKIRTYNYPQDRITDHRIGFSLSLKNVMEGNLDKIIDALIADEKALKIKAAGF.

At Gln-234 the chain carries N5-methylglutamine.

The protein belongs to the prokaryotic/mitochondrial release factor family. Post-translationally, methylated by PrmC. Methylation increases the termination efficiency of RF1.

Its subcellular location is the cytoplasm. In terms of biological role, peptide chain release factor 1 directs the termination of translation in response to the peptide chain termination codons UAG and UAA. This chain is Peptide chain release factor 1, found in Metamycoplasma arthritidis (strain 158L3-1) (Mycoplasma arthritidis).